We begin with the raw amino-acid sequence, 741 residues long: Phosphoribosylformylglycinamidine synthase subunit PurL (741 aa).

The active site involves histidine 53. ATP is bound by residues tyrosine 56 and lysine 95. Glutamate 97 is a Mg(2+) binding site. Substrate contacts are provided by residues 98 to 101 (SHNH) and arginine 120. The Proton acceptor role is filled by histidine 99. Mg(2+) is bound at residue aspartate 121. Glutamine 244 is a binding site for substrate. Mg(2+) is bound at residue aspartate 274. 318–320 (ESQ) is a substrate binding site. ATP-binding residues include aspartate 501 and glycine 538. Mg(2+) is bound at residue asparagine 539. Position 541 (serine 541) interacts with substrate.

Belongs to the FGAMS family. Monomer. Part of the FGAM synthase complex composed of 1 PurL, 1 PurQ and 2 PurS subunits.

It is found in the cytoplasm. The catalysed reaction is N(2)-formyl-N(1)-(5-phospho-beta-D-ribosyl)glycinamide + L-glutamine + ATP + H2O = 2-formamido-N(1)-(5-O-phospho-beta-D-ribosyl)acetamidine + L-glutamate + ADP + phosphate + H(+). It participates in purine metabolism; IMP biosynthesis via de novo pathway; 5-amino-1-(5-phospho-D-ribosyl)imidazole from N(2)-formyl-N(1)-(5-phospho-D-ribosyl)glycinamide: step 1/2. In terms of biological role, part of the phosphoribosylformylglycinamidine synthase complex involved in the purines biosynthetic pathway. Catalyzes the ATP-dependent conversion of formylglycinamide ribonucleotide (FGAR) and glutamine to yield formylglycinamidine ribonucleotide (FGAM) and glutamate. The FGAM synthase complex is composed of three subunits. PurQ produces an ammonia molecule by converting glutamine to glutamate. PurL transfers the ammonia molecule to FGAR to form FGAM in an ATP-dependent manner. PurS interacts with PurQ and PurL and is thought to assist in the transfer of the ammonia molecule from PurQ to PurL. The protein is Phosphoribosylformylglycinamidine synthase subunit PurL of Limosilactobacillus fermentum (strain NBRC 3956 / LMG 18251) (Lactobacillus fermentum).